A 321-amino-acid chain; its full sequence is Cytochrome c biogenesis protein CcsA (321 aa).

Transmembrane regions (helical) follow at residues 9 to 29 (ILTHISFSIISIVITIHLMTL), 44 to 64 (GIISTFFSITGLLITRWIYSG), 71 to 91 (LYESLIFLSWSFSIIHMIPYL), 98 to 118 (LSVITVPSVIFTQGFVTSCLS), 143 to 163 (MLLSYATLLCGSLLSVALLVI), 225 to 245 (IISLGFIFLTMGILSGAVWAN), 260 to 280 (WAFITWTIFAIYSHIRININF), and 288 to 308 (VASIGFLIIWICYFGINLLGI).

Belongs to the CcmF/CycK/Ccl1/NrfE/CcsA family. As to quaternary structure, may interact with Ccs1.

Its subcellular location is the plastid. It is found in the chloroplast thylakoid membrane. In terms of biological role, required during biogenesis of c-type cytochromes (cytochrome c6 and cytochrome f) at the step of heme attachment. The chain is Cytochrome c biogenesis protein CcsA from Dioscorea elephantipes (Elephant's foot yam).